A 90-amino-acid polypeptide reads, in one-letter code: Sec-independent protein translocase protein TatA (90 aa).

The chain crosses the membrane as a helical span at residues 1-21 (MGISPWTLLIVLLIVLLVFGT). Composition is skewed to basic and acidic residues over residues 42-59 (MKEGEEGAKEGEKSEPSK) and 70-90 (SGEGHTIEGERSEQPRDRHSS). Residues 42–90 (MKEGEEGAKEGEKSEPSKLEQPPEEEKESGEGHTIEGERSEQPRDRHSS) are disordered.

This sequence belongs to the TatA/E family. In terms of assembly, the Tat system comprises two distinct complexes: a TatABC complex, containing multiple copies of TatA, TatB and TatC subunits, and a separate TatA complex, containing only TatA subunits. Substrates initially bind to the TatABC complex, which probably triggers association of the separate TatA complex to form the active translocon.

It is found in the cell inner membrane. Part of the twin-arginine translocation (Tat) system that transports large folded proteins containing a characteristic twin-arginine motif in their signal peptide across membranes. TatA could form the protein-conducting channel of the Tat system. This is Sec-independent protein translocase protein TatA from Alkalilimnicola ehrlichii (strain ATCC BAA-1101 / DSM 17681 / MLHE-1).